The following is a 58-amino-acid chain: UPF0391 membrane protein OCAR_5266/OCA5_c27040 (58 aa).

The next 2 helical transmembrane spans lie at Trp4–Ala24 and Ile30–Leu50.

Belongs to the UPF0391 family.

The protein localises to the cell membrane. This chain is UPF0391 membrane protein OCAR_5266/OCA5_c27040, found in Afipia carboxidovorans (strain ATCC 49405 / DSM 1227 / KCTC 32145 / OM5) (Oligotropha carboxidovorans).